The chain runs to 143 residues: Hexaprenyl-diphosphate synthase small subunit ((2E,6E)-farnesyl-diphosphate specific) (143 aa).

Dimer of heterodimer or heterotetramer composed of a small (Hexs-a) and large (Hexs-B) subunit.

It carries out the reaction 3 isopentenyl diphosphate + (2E,6E)-farnesyl diphosphate = all-trans-hexaprenyl diphosphate + 3 diphosphate. Its function is as follows. Catalyzes the condensation of three molecules of isopentenyl diphosphate with farnesyl diphosphate (FPP) to yield (all-E)-hexaprenyl diphosphate (HexPP; C30), the precursor of the prenyl side chain of menaquinone-6. Large subunit Hexs-B catalyzes the condensation reaction and the final product chain length is cooperatively regulated by both the Hexs-A and Hexs-B subunits using the whole size of the hydrophobic cleft as a ruler. The polypeptide is Hexaprenyl-diphosphate synthase small subunit ((2E,6E)-farnesyl-diphosphate specific) (hexs-a) (Micrococcus luteus (Micrococcus lysodeikticus)).